A 263-amino-acid chain; its full sequence is Glutamate racemase (263 aa).

Residues 12–13 (DS) and 44–45 (YG) each bind substrate. Cys-75 serves as the catalytic Proton donor/acceptor. Position 76–77 (76–77 (NT)) interacts with substrate. Cys-186 acts as the Proton donor/acceptor in catalysis. 187–188 (TH) is a substrate binding site.

Belongs to the aspartate/glutamate racemases family.

The catalysed reaction is L-glutamate = D-glutamate. The protein operates within cell wall biogenesis; peptidoglycan biosynthesis. In terms of biological role, provides the (R)-glutamate required for cell wall biosynthesis. This chain is Glutamate racemase, found in Ectopseudomonas mendocina (strain ymp) (Pseudomonas mendocina).